The following is a 353-amino-acid chain: Protein CYTOKININ-RESPONSIVE GATA TRANSCRIPTION FACTOR 1 (353 aa).

The Nuclear localization signal 1 motif lies at 137–144 (IRKGAATD). The tract at residues 142-166 (ATDPEGGAVRKPRRRAQAHQDESQQ) is disordered. The GATA-type zinc finger occupies 178 to 203 (CSDCNTTKTPLWRSGPCGPKSLCNAC). The Nuclear localization signal 2 signature appears at 244 to 251 (EKRAADVD).

This sequence belongs to the type IV zinc-finger family. Class B subfamily. As to expression, mostly expressed in leaves and stems, and, at low levels, in roots.

It localises to the nucleus. In terms of biological role, transcriptional regulator that specifically binds 5'-GATA-3' or 5'-GAT-3' motifs within gene promoters. Influences the expression of nuclear encoded chloroplast-targeted genes. Regulates chloroplast development and promotes chlorophyll accumulation. Modulates plant architecture (e.g. height, length and width of leaf blades, and flowering tillers production) and represses tillering, probably by modulating number of cells. Promotes senescence. Involved in grain filling, panicle development and starch production. In Oryza sativa subsp. japonica (Rice), this protein is Protein CYTOKININ-RESPONSIVE GATA TRANSCRIPTION FACTOR 1.